A 139-amino-acid chain; its full sequence is 3-hydroxyacyl-[acyl-carrier-protein] dehydratase FabZ (139 aa).

Residue histidine 47 is part of the active site.

It belongs to the thioester dehydratase family. FabZ subfamily.

Its subcellular location is the cytoplasm. The enzyme catalyses a (3R)-hydroxyacyl-[ACP] = a (2E)-enoyl-[ACP] + H2O. Involved in unsaturated fatty acids biosynthesis. Catalyzes the dehydration of short chain beta-hydroxyacyl-ACPs and long chain saturated and unsaturated beta-hydroxyacyl-ACPs. In Clostridium perfringens (strain ATCC 13124 / DSM 756 / JCM 1290 / NCIMB 6125 / NCTC 8237 / Type A), this protein is 3-hydroxyacyl-[acyl-carrier-protein] dehydratase FabZ.